Reading from the N-terminus, the 329-residue chain is Diaminopimelate epimerase (329 aa).

Asparagine 14 and asparagine 73 together coordinate substrate. The active-site Proton donor is cysteine 82. Substrate is bound by residues 83–84, asparagine 170, asparagine 206, and 224–225; these read GN and ER. The active-site Proton acceptor is cysteine 233. 234-235 is a binding site for substrate; the sequence is GT.

The protein belongs to the diaminopimelate epimerase family. In terms of assembly, homodimer.

It is found in the cytoplasm. It carries out the reaction (2S,6S)-2,6-diaminopimelate = meso-2,6-diaminopimelate. Its pathway is amino-acid biosynthesis; L-lysine biosynthesis via DAP pathway; DL-2,6-diaminopimelate from LL-2,6-diaminopimelate: step 1/1. Its function is as follows. Catalyzes the stereoinversion of LL-2,6-diaminopimelate (L,L-DAP) to meso-diaminopimelate (meso-DAP), a precursor of L-lysine and an essential component of the bacterial peptidoglycan. This Listeria innocua serovar 6a (strain ATCC BAA-680 / CLIP 11262) protein is Diaminopimelate epimerase.